The primary structure comprises 249 residues: 2,3-bisphosphoglycerate-dependent phosphoglycerate mutase (249 aa).

Residues 9–16 (RHGESEWN), 22–23 (TG), arginine 61, 88–91 (ERHY), lysine 99, 115–116 (RR), and 184–185 (GN) each bind substrate. Histidine 10 acts as the Tele-phosphohistidine intermediate in catalysis. The active-site Proton donor/acceptor is the glutamate 88.

This sequence belongs to the phosphoglycerate mutase family. BPG-dependent PGAM subfamily.

The catalysed reaction is (2R)-2-phosphoglycerate = (2R)-3-phosphoglycerate. It functions in the pathway carbohydrate degradation; glycolysis; pyruvate from D-glyceraldehyde 3-phosphate: step 3/5. In terms of biological role, catalyzes the interconversion of 2-phosphoglycerate and 3-phosphoglycerate. The sequence is that of 2,3-bisphosphoglycerate-dependent phosphoglycerate mutase from Cutibacterium acnes (strain DSM 16379 / KPA171202) (Propionibacterium acnes).